Reading from the N-terminus, the 469-residue chain is 3-isopropylmalate dehydratase large subunit (469 aa).

3 residues coordinate [4Fe-4S] cluster: C347, C408, and C411.

It belongs to the aconitase/IPM isomerase family. LeuC type 1 subfamily. Heterodimer of LeuC and LeuD. [4Fe-4S] cluster is required as a cofactor.

The catalysed reaction is (2R,3S)-3-isopropylmalate = (2S)-2-isopropylmalate. It participates in amino-acid biosynthesis; L-leucine biosynthesis; L-leucine from 3-methyl-2-oxobutanoate: step 2/4. Catalyzes the isomerization between 2-isopropylmalate and 3-isopropylmalate, via the formation of 2-isopropylmaleate. The protein is 3-isopropylmalate dehydratase large subunit of Actinobacillus succinogenes (strain ATCC 55618 / DSM 22257 / CCUG 43843 / 130Z).